The following is a 172-amino-acid chain: MNYFNVGKIVNTQGLQGEMRVLSVTDFAEERFKKGAELALFDEKDQFVQTVTIASHRKQKNFDIIKFKDMYHINTIEKYKGYSLKVAEEDLNDLDDGEFYYHEIIGLEVYEGDSLVGTIKEILQPGANDVWVVKRKGKRDLLLPYIPPVVLNVDIPNKRVDVEILEGLDDED.

One can recognise a PRC barrel domain in the interval 95–168 (DDGEFYYHEI…RVDVEILEGL (74 aa)).

The protein belongs to the RimM family. Binds ribosomal protein uS19.

Its subcellular location is the cytoplasm. Functionally, an accessory protein needed during the final step in the assembly of 30S ribosomal subunit, possibly for assembly of the head region. Essential for efficient processing of 16S rRNA. May be needed both before and after RbfA during the maturation of 16S rRNA. It has affinity for free ribosomal 30S subunits but not for 70S ribosomes. This is Ribosome maturation factor RimM from Streptococcus pneumoniae (strain P1031).